A 71-amino-acid polypeptide reads, in one-letter code: Pro-MCH (71 aa).

Residues Ala1–Gly20 form the signal peptide.

This sequence belongs to the melanin-concentrating hormone family.

The protein resides in the secreted. This is Pro-MCH (PMCH) from Hylobates lar (Lar gibbon).